Consider the following 116-residue polypeptide: Nitrogenase iron-iron protein delta chain (116 aa).

As to quaternary structure, hexamer of two alpha, two beta, and two delta chains. Iron-sulfur cluster is required as a cofactor.

It carries out the reaction N2 + 8 reduced [2Fe-2S]-[ferredoxin] + 16 ATP + 16 H2O = H2 + 8 oxidized [2Fe-2S]-[ferredoxin] + 2 NH4(+) + 16 ADP + 16 phosphate + 6 H(+). Its function is as follows. The key enzymatic reactions in nitrogen fixation are catalyzed by the nitrogenase complex, which has 2 components: the iron protein (component 2) and a component 1 which is either a molybdenum-iron protein, a vanadium-iron, or an iron-iron protein. This is Nitrogenase iron-iron protein delta chain (anfG) from Clostridium pasteurianum.